The chain runs to 264 residues: uncharacterized protein (264 aa).

A signal peptide spans 1 to 22 (MGYLKKLALFISVIILGIFIIG). C23 carries N-palmitoyl cysteine lipidation. C23 carries S-diacylglycerol cysteine lipidation.

Belongs to the staphylococcal tandem lipoprotein family.

The protein resides in the cell membrane. This is an uncharacterized protein from Staphylococcus aureus (strain N315).